Reading from the N-terminus, the 540-residue chain is MLO protein homolog 1 (540 aa).

The Extracellular segment spans residues 1-16; sequence MAGGRSGSRELPETPT. Residues 17–37 traverse the membrane as a helical segment; sequence WAVAVVCAVLVLVSAAMEHGL. Topologically, residues 38-60 are cytoplasmic; that stretch reads HNLSHWFRRRQKKAMGDALDKIK. A helical membrane pass occupies residues 61-81; sequence AELMLLGFISLLLTVAQAPIS. The Extracellular segment spans residues 82 to 142; it reads KICIPKSAAN…MSAKSMHQLH (61 aa). Residues 143-163 traverse the membrane as a helical segment; that stretch reads IFIFVLAVFHVTYCIITMGLG. Residues 164–265 are Cytoplasmic-facing; sequence RLKMKKWKKW…IKRSLEDDFK (102 aa). The helical transmembrane segment at 266–286 threads the bilayer; sequence VVVGISLPLWFVGILVLFLDI. His-287 is a topological domain (extracellular). A helical membrane pass occupies residues 288 to 308; it reads GLGTLIWISFVPLIIVLLVGT. Residues 309 to 347 lie on the Cytoplasmic side of the membrane; sequence KLEMVIMEMAQEIQDRATVIQGAPMVEPSNKYFWFNRPD. The helical transmembrane segment at 348–368 threads the bilayer; the sequence is WVLFFIHLTLFHNAFQMAHFV. The Extracellular portion of the chain corresponds to 369-383; that stretch reads WTMATPGLKKCFHEN. A helical membrane pass occupies residues 384-404; the sequence is IWLSIVEVIVGISLQVLCSYI. At 405–540 the chain is on the cytoplasmic side; sequence TFPLYALVTQ…DSDFSFSAQR (136 aa). The interval 426–447 is calmodulin-binding; sequence EQTMKALMNWRKKAMEKKKVRD. The interval 468–526 is disordered; the sequence is ASPVHLLQDHRARSDDPPSPITVASPPAPEEDMYPVPAAAASRQLLDDPPDRRWMASSS. 2 stretches are compositionally biased toward basic and acidic residues: residues 474-483 and 512-521; these read LQDHRARSDD and LLDDPPDRRW.

The protein belongs to the MLO family.

The protein resides in the membrane. Its function is as follows. May be involved in modulation of pathogen defense and leaf cell death. Activity seems to be regulated by Ca(2+)-dependent calmodulin binding and seems not to require heterotrimeric G proteins. In Oryza sativa subsp. indica (Rice), this protein is MLO protein homolog 1 (MLO1).